Here is a 27-residue protein sequence, read N- to C-terminus: MLFKKISKFVGWLSGSSVGSITSKTHE.

The protein resides in the plastid. The protein localises to the chloroplast. This is an uncharacterized protein from Anthoceros angustus (Hornwort).